Here is a 388-residue protein sequence, read N- to C-terminus: Succinyl-diaminopimelate desuccinylase (388 aa).

A Zn(2+)-binding site is contributed by His72. Asp74 is an active-site residue. Asp105 serves as a coordination point for Zn(2+). Catalysis depends on Glu139, which acts as the Proton acceptor. Zn(2+)-binding residues include Glu140, Glu168, and His353.

The protein belongs to the peptidase M20A family. DapE subfamily. In terms of assembly, homodimer. Zn(2+) serves as cofactor. The cofactor is Co(2+).

The catalysed reaction is N-succinyl-(2S,6S)-2,6-diaminopimelate + H2O = (2S,6S)-2,6-diaminopimelate + succinate. It participates in amino-acid biosynthesis; L-lysine biosynthesis via DAP pathway; LL-2,6-diaminopimelate from (S)-tetrahydrodipicolinate (succinylase route): step 3/3. In terms of biological role, catalyzes the hydrolysis of N-succinyl-L,L-diaminopimelic acid (SDAP), forming succinate and LL-2,6-diaminopimelate (DAP), an intermediate involved in the bacterial biosynthesis of lysine and meso-diaminopimelic acid, an essential component of bacterial cell walls. The protein is Succinyl-diaminopimelate desuccinylase of Orientia tsutsugamushi (strain Boryong) (Rickettsia tsutsugamushi).